The sequence spans 201 residues: Small ribosomal subunit protein uS4c (201 aa).

Residues 15–43 are disordered; sequence LGALPGLTSKRPRPGSDLRNQSRSGKRSQ. The S4 RNA-binding domain maps to 89-150; the sequence is MRLDNILFRL…EQRSRALIQN (62 aa).

It belongs to the universal ribosomal protein uS4 family. In terms of assembly, part of the 30S ribosomal subunit. Contacts protein S5. The interaction surface between S4 and S5 is involved in control of translational fidelity.

It is found in the plastid. Its subcellular location is the chloroplast. One of the primary rRNA binding proteins, it binds directly to 16S rRNA where it nucleates assembly of the body of the 30S subunit. Functionally, with S5 and S12 plays an important role in translational accuracy. This Liriodendron tulipifera (Tuliptree) protein is Small ribosomal subunit protein uS4c (rps4).